The primary structure comprises 406 residues: Coenzyme A biosynthesis bifunctional protein CoaBC (406 aa).

The phosphopantothenoylcysteine decarboxylase stretch occupies residues 2–190; the sequence is SLAGKKIVLG…SPVNDLKHLN (189 aa). The active-site Proton donor is the Cys-158. A phosphopantothenate--cysteine ligase region spans residues 191–406; sequence IMITAGPTRE…VTRYDEKNRR (216 aa). Residues 273-275, Asp-279, Lys-289, 308-311, Phe-327, Lys-341, and Lys-345 contribute to the CTP site; these read GCA and PDIV.

It in the N-terminal section; belongs to the HFCD (homo-oligomeric flavin containing Cys decarboxylase) superfamily. The protein in the C-terminal section; belongs to the PPC synthetase family. Requires Mg(2+) as cofactor. FMN serves as cofactor.

It carries out the reaction N-[(R)-4-phosphopantothenoyl]-L-cysteine + H(+) = (R)-4'-phosphopantetheine + CO2. The enzyme catalyses (R)-4'-phosphopantothenate + L-cysteine + CTP = N-[(R)-4-phosphopantothenoyl]-L-cysteine + CMP + diphosphate + H(+). It functions in the pathway cofactor biosynthesis; coenzyme A biosynthesis; CoA from (R)-pantothenate: step 2/5. It participates in cofactor biosynthesis; coenzyme A biosynthesis; CoA from (R)-pantothenate: step 3/5. Its function is as follows. Catalyzes two sequential steps in the biosynthesis of coenzyme A. In the first step cysteine is conjugated to 4'-phosphopantothenate to form 4-phosphopantothenoylcysteine. In the second step the latter compound is decarboxylated to form 4'-phosphopantotheine. This Escherichia coli O6:H1 (strain CFT073 / ATCC 700928 / UPEC) protein is Coenzyme A biosynthesis bifunctional protein CoaBC.